A 335-amino-acid polypeptide reads, in one-letter code: Nucleoid-associated protein PSEEN4449 (335 aa).

It belongs to the YejK family.

It is found in the cytoplasm. It localises to the nucleoid. In Pseudomonas entomophila (strain L48), this protein is Nucleoid-associated protein PSEEN4449.